The sequence spans 793 residues: Protein translocase subunit SecA 2 (793 aa).

Residues glutamine 77, 95-99 (GEGKT), and aspartate 493 each bind ATP.

Belongs to the SecA family. In terms of assembly, monomer and homodimer. Part of the essential Sec protein translocation apparatus which comprises SecA, SecYEG and auxiliary proteins SecDF. Other proteins may also be involved.

It localises to the cell membrane. Its subcellular location is the cytoplasm. It catalyses the reaction ATP + H2O + cellular proteinSide 1 = ADP + phosphate + cellular proteinSide 2.. Its function is as follows. Part of the Sec protein translocase complex. Interacts with the SecYEG preprotein conducting channel. Has a central role in coupling the hydrolysis of ATP to the transfer of proteins into and across the cell membrane, serving as an ATP-driven molecular motor driving the stepwise translocation of polypeptide chains across the membrane. The protein is Protein translocase subunit SecA 2 of Streptococcus sanguinis (strain SK36).